We begin with the raw amino-acid sequence, 340 residues long: Protein RecA (340 aa).

ATP is bound at residue 74–81 (GPESSGKT).

This sequence belongs to the RecA family.

It localises to the cytoplasm. In terms of biological role, can catalyze the hydrolysis of ATP in the presence of single-stranded DNA, the ATP-dependent uptake of single-stranded DNA by duplex DNA, and the ATP-dependent hybridization of homologous single-stranded DNAs. It interacts with LexA causing its activation and leading to its autocatalytic cleavage. The protein is Protein RecA of Porphyromonas gingivalis (strain ATCC 33277 / DSM 20709 / CIP 103683 / JCM 12257 / NCTC 11834 / 2561).